The chain runs to 201 residues: Ribonuclease HII (201 aa).

An RNase H type-2 domain is found at 14–201 (NLIAGVDEVG…KPVKRILGIE (188 aa)). Positions 20, 21, and 112 each coordinate a divalent metal cation.

It belongs to the RNase HII family. Mn(2+) is required as a cofactor. It depends on Mg(2+) as a cofactor.

It is found in the cytoplasm. It catalyses the reaction Endonucleolytic cleavage to 5'-phosphomonoester.. Endonuclease that specifically degrades the RNA of RNA-DNA hybrids. The protein is Ribonuclease HII of Photobacterium profundum (strain SS9).